The following is a 204-amino-acid chain: Holliday junction branch migration complex subunit RuvA (204 aa).

The domain I stretch occupies residues 1–64 (MIGRLRGTLI…EDAQLLYGFN (64 aa)). The segment at 65 to 143 (TVSERALFRE…GWGAGDLFTP (79 aa)) is domain II. Positions 144–155 (ATDAAPVDSTPV) are flexible linker. The interval 156 to 204 (IAQNAQEEAMSALLALGYKPPQASKAVSQVAKAGMSSEELIREALKSMV) is domain III.

It belongs to the RuvA family. Homotetramer. Forms an RuvA(8)-RuvB(12)-Holliday junction (HJ) complex. HJ DNA is sandwiched between 2 RuvA tetramers; dsDNA enters through RuvA and exits via RuvB. An RuvB hexamer assembles on each DNA strand where it exits the tetramer. Each RuvB hexamer is contacted by two RuvA subunits (via domain III) on 2 adjacent RuvB subunits; this complex drives branch migration. In the full resolvosome a probable DNA-RuvA(4)-RuvB(12)-RuvC(2) complex forms which resolves the HJ.

It localises to the cytoplasm. Functionally, the RuvA-RuvB-RuvC complex processes Holliday junction (HJ) DNA during genetic recombination and DNA repair, while the RuvA-RuvB complex plays an important role in the rescue of blocked DNA replication forks via replication fork reversal (RFR). RuvA specifically binds to HJ cruciform DNA, conferring on it an open structure. The RuvB hexamer acts as an ATP-dependent pump, pulling dsDNA into and through the RuvAB complex. HJ branch migration allows RuvC to scan DNA until it finds its consensus sequence, where it cleaves and resolves the cruciform DNA. This is Holliday junction branch migration complex subunit RuvA from Vibrio cholerae serotype O1 (strain ATCC 39541 / Classical Ogawa 395 / O395).